The primary structure comprises 464 residues: GTPase Der (464 aa).

EngA-type G domains lie at 3 to 166 (ALVA…PVLE) and 177 to 350 (LQFA…QSAN). Residues 9–16 (GRPNVGKS), 56–60 (DTGGV), 118–121 (NKAE), 183–190 (GRPNVGKS), 230–234 (DTAGI), and 295–298 (NKWD) each bind GTP. Residues 351-435 (SHLPTGELNR…PIALEFRTVK (85 aa)) enclose the KH-like domain.

It belongs to the TRAFAC class TrmE-Era-EngA-EngB-Septin-like GTPase superfamily. EngA (Der) GTPase family. Associates with the 50S ribosomal subunit.

In terms of biological role, GTPase that plays an essential role in the late steps of ribosome biogenesis. This is GTPase Der from Nitrosococcus oceani (strain ATCC 19707 / BCRC 17464 / JCM 30415 / NCIMB 11848 / C-107).